The primary structure comprises 1458 residues: GTPase-activating protein and VPS9 domain-containing protein 1 (1458 aa).

The 239-residue stretch at S147–G385 folds into the Ras-GAP domain. Position 227 is a phosphoserine (S227). Phosphothreonine is present on residues T390 and T458. The segment at A447–K475 is disordered. The span at K451–N473 shows a compositional bias: polar residues. A Phosphotyrosine modification is found at Y460. Position 466 is a phosphoserine (S466). A Phosphothreonine modification is found at T470. S566 and S569 each carry phosphoserine. Disordered stretches follow at residues G574–G608, L738–S821, and H846–N867. Residues G578–S588 show a composition bias toward polar residues. Residues S742, S746, and S757 each carry the phosphoserine modification. The segment covering S758 to D777 has biased composition (polar residues). T762 is subject to Phosphothreonine. S766 bears the Phosphoserine mark. Basic and acidic residues predominate over residues I778–C789. Phosphoserine occurs at positions 876, 902, 903, 908, and 914. A compositionally biased stretch (basic and acidic residues) spans K888–S902. 2 disordered regions span residues K888 to A1022 and K1039 to L1072. A compositionally biased stretch (low complexity) spans A930–K951. 2 stretches are compositionally biased toward basic and acidic residues: residues D952–R973 and E995–P1006. At S964 the chain carries Phosphoserine. Polar residues predominate over residues S1010–A1022. 2 positions are modified to phosphoserine: S1017 and S1044. Positions E1061 to A1071 are enriched in basic and acidic residues. A phosphoserine mark is found at S1076 and S1083. The 141-residue stretch at I1318–K1458 folds into the VPS9 domain.

It belongs to the GAPVD1 family. Interacts with RAB5A. Interacts with TRIP10/CIP4. Present in adipocytes and fibroblasts (at protein level). Ubiquitously expressed.

Its subcellular location is the membrane. The protein localises to the endosome. Acts both as a GTPase-activating protein (GAP) and a guanine nucleotide exchange factor (GEF), and participates in various processes such as endocytosis, insulin receptor internalization or LC2A4/GLUT4 trafficking. Acts as a GEF for the Ras-related protein RAB31 by exchanging bound GDP for free GTP, leading to regulate LC2A4/GLUT4 trafficking. In the absence of insulin, it maintains RAB31 in an active state and promotes a futile cycle between LC2A4/GLUT4 storage vesicles and early endosomes, retaining LC2A4/GLUT4 inside the cells. Upon insulin stimulation, it is translocated to the plasma membrane, releasing LC2A4/GLUT4 from intracellular storage vesicles. Also involved in EGFR trafficking and degradation, possibly by promoting EGFR ubiquitination and subsequent degradation by the proteasome. Has GEF activity for Rab5 and GAP activity for Ras. The protein is GTPase-activating protein and VPS9 domain-containing protein 1 (Gapvd1) of Mus musculus (Mouse).